A 322-amino-acid chain; its full sequence is ADP,ATP carrier protein (322 aa).

3 Solcar repeats span residues 25-118 (STFF…FKKM), 130-222 (KWFA…LKPV), and 230-316 (GNFL…VQLL). The next 5 helical transmembrane spans lie at 27–54 (FFFD…VKLL), 95–119 (TANV…KKMF), 128–148 (YAKW…ASLL), 198–219 (FGPS…YDTL), and 233–253 (LASF…SYPL). The ADP site is built by Arg100 and Lys112. ADP is bound at residue Arg257. An important for transport activity region spans residues 257–262 (RRRMMM). The Nucleotide carrier signature motif motif lies at 257 to 262 (RRRMMM). The chain crosses the membrane as a helical span at residues 293 to 313 (AGANILRGVAGAGVLSIYDQV).

The protein belongs to the mitochondrial carrier (TC 2.A.29) family. Monomer.

It is found in the mitochondrion inner membrane. It catalyses the reaction ADP(in) + ATP(out) = ADP(out) + ATP(in). Its activity is regulated as follows. The matrix-open state (m-state) is inhibited by the membrane-permeable bongkrekic acid (BKA). The cytoplasmic-open state (c-state) is inhibited by the membrane-impermeable toxic inhibitor carboxyatractyloside (CATR). ADP:ATP antiporter that mediates import of ADP into the mitochondrial matrix for ATP synthesis, and export of ATP out to fuel the cell. Cycles between the cytoplasmic-open state (c-state) and the matrix-open state (m-state): operates by the alternating access mechanism with a single substrate-binding site intermittently exposed to either the cytosolic (c-state) or matrix (m-state) side of the inner mitochondrial membrane. The chain is ADP,ATP carrier protein (anc1) from Schizosaccharomyces pombe (strain 972 / ATCC 24843) (Fission yeast).